We begin with the raw amino-acid sequence, 430 residues long: Asparagine--tRNA ligase (430 aa).

The protein belongs to the class-II aminoacyl-tRNA synthetase family. In terms of assembly, homodimer.

The protein resides in the cytoplasm. The enzyme catalyses tRNA(Asn) + L-asparagine + ATP = L-asparaginyl-tRNA(Asn) + AMP + diphosphate + H(+). In Shouchella clausii (strain KSM-K16) (Alkalihalobacillus clausii), this protein is Asparagine--tRNA ligase.